Consider the following 730-residue polypeptide: UvrABC system protein C (730 aa).

The 80-residue stretch at 16–95 folds into the GIY-YIG domain; the sequence is AAPGVYKFRD…IKEFDPRFNV (80 aa). In terms of domain architecture, UVR spans 208–243; it reads DKLVKDLEKRMQQASEDLDFETAARLRDDIGALRKA. Positions 678–730 are disordered; the sequence is ARALPAAVGDDELDKESESSVTSADAPSAESGSGDEGSESRELSMPTTGPSAQ.

It belongs to the UvrC family. In terms of assembly, interacts with UvrB in an incision complex.

Its subcellular location is the cytoplasm. Functionally, the UvrABC repair system catalyzes the recognition and processing of DNA lesions. UvrC both incises the 5' and 3' sides of the lesion. The N-terminal half is responsible for the 3' incision and the C-terminal half is responsible for the 5' incision. The chain is UvrABC system protein C from Rhodococcus erythropolis (strain PR4 / NBRC 100887).